Here is a 347-residue protein sequence, read N- to C-terminus: Protein RecA (347 aa).

70–77 (GPESSGKT) is an ATP binding site.

Belongs to the RecA family.

The protein localises to the cytoplasm. In terms of biological role, can catalyze the hydrolysis of ATP in the presence of single-stranded DNA, the ATP-dependent uptake of single-stranded DNA by duplex DNA, and the ATP-dependent hybridization of homologous single-stranded DNAs. It interacts with LexA causing its activation and leading to its autocatalytic cleavage. This is Protein RecA from Ruegeria pomeroyi (strain ATCC 700808 / DSM 15171 / DSS-3) (Silicibacter pomeroyi).